The sequence spans 381 residues: D-rhamnosyltransferase WbpZ (381 aa).

The substrate site is built by Glu19, His116, Lys206, and Val252.

The protein belongs to the glycosyltransferase group 1 family. Glycosyltransferase 4 subfamily.

It is found in the cytoplasm. It catalyses the reaction GDP-alpha-D-rhamnose + N-acetyl-alpha-D-glucosaminyl-di-trans,octa-cis-undecaprenyl diphosphate = alpha-D-rhamnosyl-(1-&gt;3)-N-acetyl-alpha-D-glucosaminyl-1-diphospho-di-trans,octa-cis-undecaprenol + GDP + H(+). The catalysed reaction is GDP-alpha-D-rhamnose + N-acetyl-alpha-D-galactosaminyl-di-trans,octa-cis-undecaprenyl diphosphate = alpha-D-rhamnosyl-(1-&gt;3)-N-acetyl-alpha-D-galactosaminyl-1-diphospho-di-trans,octa-cis-undecaprenol + GDP + H(+). It carries out the reaction N-acetyl-alpha-D-glucosaminyl-di-trans,octa-cis-undecaprenyl diphosphate + GDP-alpha-D-mannose = alpha-D-mannosyl-(1-&gt;3)-N-acetyl-alpha-D-glucosaminyl-di-trans,octa-cis-undecaprenyl diphosphate + GDP + H(+). The enzyme catalyses N-acetyl-alpha-D-galactosaminyl-di-trans,octa-cis-undecaprenyl diphosphate + GDP-alpha-D-mannose = alpha-D-mannosyl-(1-&gt;3)-N-acetyl-alpha-D-galctosaminyl-1-diphospho-di-trans,octa-cis-undecaprenol + GDP + H(+). The protein operates within lipopolysaccharide biosynthesis; LPS oligosaccharide biosynthesis. With respect to regulation, not activated by dithiothreitol (DTT) using GlcNAc-alpha-PO(3)-PO(3)-phenylundecyl (GlcNAc-PP-PhU) as acceptor substrate. 0.25% Triton X-100 and 0.125% NP-40 increases the activity 2.5-fold and 2-fold, respectively. 0.125% octyl glucoside has little effect on activity. Slightly increased activity with Mg(2+) and Pb(2+), while no effect with Mn(2+), Co(2+), Ni(2+), Cu(2+), Zn(2+), Ca(2+) or EDTA. Not inhibited by N-butyryl-galactosamine-alpha-benzyl or N-butyryl-glucosamine-beta-benzyl. Bis-imidazolium salts having aliphatic spacer groups with 4 or 6 carbons have little effect on activity, but spacer groups of 18-22 aliphatic carbons inhibit activity, with the most potent inhibitor being bis-imidazolium salt having a 20-carbon chain spacer length. Functionally, non-processive alpha-1,3-D-rhamnosyltransferase. Catalyzes the transfer of one D-rhamnose (D-Rha) residue from donor substrate GDP-D-Rha in alpha-1-3 linkage to both GlcNAc- and GalNAc-diphosphate-lipid acceptor substrates. Is also able to transfer D-mannose (D-Man) to these acceptors at a lower level. Nucleotide sugars GDP-D-Rha, GDP-Fuc, UDP-Gal, UDP-GalNAc, UDP-GlcNAc and CMP-sialic acid cannot act as donor substrates. Only compounds with a diphosphate as the aglycone group can act as acceptor substrates. No activity is detected with compounds containing a diphosphate mimic. Fluorescent undecyl-anthracenyl group-containing compounds, such as GlcNAc-PO(3)-PO(3)-AnthrU and GalNAc-PO(3)-PO(3)-AnthrU, are also good acceptor substrates. Involved in the biosynthesis of the common polysaccharide antigen (CPA), also called A band, which is one of the two major cell surface O-antigens of the P.aeruginosa lipopolysaccharide. Involved in susceptibility to antibiotic colistin. This is D-rhamnosyltransferase WbpZ from Pseudomonas aeruginosa (strain ATCC 15692 / DSM 22644 / CIP 104116 / JCM 14847 / LMG 12228 / 1C / PRS 101 / PAO1).